The primary structure comprises 207 residues: MLGVQKKRSTRKTAARKTVVRKPAAKKTAAKKASVRKVAAKKTVARKTVAKKAVAARKPAAKKTAAKKAPVRKVAAKKTVARKTVAKKAVAARKTVAKKSVAARKTAAKKAPVRKVAAKKTVARKTVAKKAVAARKPAAKRTVSTKKTAVAAKAGVCMKKHKHTAACGRVAASGVKVCASSAKRRTHHNRSRTAHSWRQQLMKLVAK.

2 stretches are compositionally biased toward basic residues: residues 1–50 (MLGV…KTVA) and 59–72 (PAAK…APVR). The interval 1–72 (MLGVQKKRST…KTAAKKAPVR (72 aa)) is disordered. A run of 3 repeats spans residues 35–58 (VRKV…AARK), 71–94 (VRKV…AARK), and 113–136 (VRKV…AARK). Positions 35-136 (VRKVAAKKTV…VAKKAVAARK (102 aa)) are 3 X 24 AA repeats of V-R-K-V-A-A-K-K-T-V-A-R-K-T-V-A-K-K-A-V-A-A-R-K.

The protein belongs to the histone H1/H5 family. HCT subfamily.

Its function is as follows. Might have a role in establishing the nucleoid structure of elementary bodies. The chain is Histone H1-like protein HC2 (hctB) from Chlamydia muridarum (strain MoPn / Nigg).